Here is a 119-residue protein sequence, read N- to C-terminus: Large ribosomal subunit protein uL22 (119 aa).

This sequence belongs to the universal ribosomal protein uL22 family. Part of the 50S ribosomal subunit.

In terms of biological role, this protein binds specifically to 23S rRNA; its binding is stimulated by other ribosomal proteins, e.g. L4, L17, and L20. It is important during the early stages of 50S assembly. It makes multiple contacts with different domains of the 23S rRNA in the assembled 50S subunit and ribosome. Functionally, the globular domain of the protein is located near the polypeptide exit tunnel on the outside of the subunit, while an extended beta-hairpin is found that lines the wall of the exit tunnel in the center of the 70S ribosome. This is Large ribosomal subunit protein uL22 from Chlorobium luteolum (strain DSM 273 / BCRC 81028 / 2530) (Pelodictyon luteolum).